We begin with the raw amino-acid sequence, 921 residues long: Valine--tRNA ligase (921 aa).

Residues P40–H50 carry the 'HIGH' region motif. Positions K522–S526 match the 'KMSKS' region motif. K525 contacts ATP. Residues M849 to L921 are a coiled coil.

This sequence belongs to the class-I aminoacyl-tRNA synthetase family. ValS type 1 subfamily. Monomer.

The protein localises to the cytoplasm. The enzyme catalyses tRNA(Val) + L-valine + ATP = L-valyl-tRNA(Val) + AMP + diphosphate. Its function is as follows. Catalyzes the attachment of valine to tRNA(Val). As ValRS can inadvertently accommodate and process structurally similar amino acids such as threonine, to avoid such errors, it has a 'posttransfer' editing activity that hydrolyzes mischarged Thr-tRNA(Val) in a tRNA-dependent manner. In Legionella pneumophila (strain Lens), this protein is Valine--tRNA ligase.